Reading from the N-terminus, the 558-residue chain is Laccase-10 (558 aa).

The signal sequence occupies residues 1–22 (MVFPIRILVLFALLAFPACVHG). 2 consecutive Plastocyanin-like domains span residues 30–146 (NVVT…PKLG) and 157–308 (EEVI…YSGT). A glycan (N-linked (GlcNAc...) asparagine) is linked at Asn76. Cu cation-binding residues include His80 and His82. Asn112 carries N-linked (GlcNAc...) asparagine glycosylation. 2 residues coordinate Cu cation: His125 and His127. Asn185, Asn296, Asn323, Asn373, Asn383, Asn400, and Asn441 each carry an N-linked (GlcNAc...) asparagine glycan. The Plastocyanin-like 3 domain maps to 408-542 (DFPAKPRRVF…KMAFLVENGK (135 aa)). Residues His459, His462, His464, His521, Cys522, His523, and His527 each coordinate Cu cation. The N-linked (GlcNAc...) asparagine glycan is linked to Asn545.

It belongs to the multicopper oxidase family. It depends on Cu cation as a cofactor. In terms of tissue distribution, ubiquitous, with lower levels in siliques.

Its subcellular location is the secreted. It localises to the extracellular space. The protein localises to the apoplast. The catalysed reaction is 4 hydroquinone + O2 = 4 benzosemiquinone + 2 H2O. Its function is as follows. Lignin degradation and detoxification of lignin-derived products. The polypeptide is Laccase-10 (LAC10) (Arabidopsis thaliana (Mouse-ear cress)).